We begin with the raw amino-acid sequence, 156 residues long: Nucleoredoxin-like protein 2 (156 aa).

Residues 9 to 147 (RLVTREGTVV…LACFQNWVEA (139 aa)) form the Thioredoxin domain.

This sequence belongs to the nucleoredoxin family. Both isoforms are expressed in retina, in the photoreceptor layer, and throughout the olfactory sensory neuron layer of the nasal epithelium, in neurons. Also expressed at low levels in brain and testis.

Its function is as follows. May be involved in the maintenance of both the function and the viability of sensory neurons, including photoreceptors and olfactory neurons. In the retina, isoform 1 may be required for rod function and isoform 2 for cone viability and function. The sequence is that of Nucleoredoxin-like protein 2 (Nxnl2) from Mus musculus (Mouse).